The primary structure comprises 159 residues: Putative 4-hydroxy-4-methyl-2-oxoglutarate aldolase (159 aa).

Residues 75-78 (GDQL) and R97 each bind substrate. Residue D98 coordinates a divalent metal cation.

It belongs to the class II aldolase/RraA-like family. As to quaternary structure, homotrimer. A divalent metal cation is required as a cofactor.

The enzyme catalyses 4-hydroxy-4-methyl-2-oxoglutarate = 2 pyruvate. It carries out the reaction oxaloacetate + H(+) = pyruvate + CO2. Functionally, catalyzes the aldol cleavage of 4-hydroxy-4-methyl-2-oxoglutarate (HMG) into 2 molecules of pyruvate. Also contains a secondary oxaloacetate (OAA) decarboxylase activity due to the common pyruvate enolate transition state formed following C-C bond cleavage in the retro-aldol and decarboxylation reactions. The chain is Putative 4-hydroxy-4-methyl-2-oxoglutarate aldolase from Laribacter hongkongensis (strain HLHK9).